The following is a 61-amino-acid chain: Aerolysin regulatory protein (61 aa).

The span at 1 to 14 (MMIKRHLPQPRHRE) shows a compositional bias: basic residues. The interval 1–61 (MMIKRHLPQP…GQTHTGPQIR (61 aa)) is disordered. Residues 51-61 (DGQTHTGPQIR) show a composition bias toward polar residues.

Regulation of the expression of aerolysin. The polypeptide is Aerolysin regulatory protein (aerC) (Aeromonas sobria).